A 91-amino-acid polypeptide reads, in one-letter code: Small ribosomal subunit protein bS20 (91 aa).

The tract at residues 1 to 28 (MANTASAEKRNRQAQKRRARNVQVRTGV) is disordered.

It belongs to the bacterial ribosomal protein bS20 family.

Its function is as follows. Binds directly to 16S ribosomal RNA. This Anaeromyxobacter dehalogenans (strain 2CP-1 / ATCC BAA-258) protein is Small ribosomal subunit protein bS20.